Reading from the N-terminus, the 579-residue chain is 2-succinyl-5-enolpyruvyl-6-hydroxy-3-cyclohexene-1-carboxylate synthase (579 aa).

This sequence belongs to the TPP enzyme family. MenD subfamily. In terms of assembly, homodimer. It depends on Mg(2+) as a cofactor. The cofactor is Mn(2+). Thiamine diphosphate serves as cofactor.

The enzyme catalyses isochorismate + 2-oxoglutarate + H(+) = 5-enolpyruvoyl-6-hydroxy-2-succinyl-cyclohex-3-ene-1-carboxylate + CO2. The protein operates within quinol/quinone metabolism; 1,4-dihydroxy-2-naphthoate biosynthesis; 1,4-dihydroxy-2-naphthoate from chorismate: step 2/7. It functions in the pathway quinol/quinone metabolism; menaquinone biosynthesis. Its function is as follows. Catalyzes the thiamine diphosphate-dependent decarboxylation of 2-oxoglutarate and the subsequent addition of the resulting succinic semialdehyde-thiamine pyrophosphate anion to isochorismate to yield 2-succinyl-5-enolpyruvyl-6-hydroxy-3-cyclohexene-1-carboxylate (SEPHCHC). This is 2-succinyl-5-enolpyruvyl-6-hydroxy-3-cyclohexene-1-carboxylate synthase from Shewanella frigidimarina (strain NCIMB 400).